The sequence spans 502 residues: 4,4'-diapophytoene desaturase (4,4'-diaponeurosporene-forming) (502 aa).

5–17 (VIGAGVTGLAAAA) is a binding site for FAD.

The protein belongs to the carotenoid/retinoid oxidoreductase family. CrtN subfamily.

The enzyme catalyses 15-cis-4,4'-diapophytoene + 3 FAD + 3 H(+) = all-trans-4,4'-diaponeurosporene + 3 FADH2. It participates in carotenoid biosynthesis; staphyloxanthin biosynthesis; staphyloxanthin from farnesyl diphosphate: step 2/5. Involved in the biosynthesis of the yellow-orange carotenoid staphyloxanthin, which plays a role in the virulence via its protective function against oxidative stress. Catalyzes three successive dehydrogenation reactions that lead to the introduction of three double bonds into 4,4'-diapophytoene (dehydrosqualene), with 4,4'-diapophytofluene and 4,4'-diapo-zeta-carotene as intermediates, and 4,4'-diaponeurosporene (the major deep-yellow pigment in staphylococci strains) as the end product. The polypeptide is 4,4'-diapophytoene desaturase (4,4'-diaponeurosporene-forming) (Staphylococcus aureus (strain MW2)).